A 215-amino-acid polypeptide reads, in one-letter code: Pyrrolidone-carboxylate peptidase (215 aa).

Active-site residues include glutamate 80, cysteine 143, and histidine 167.

The protein belongs to the peptidase C15 family. Homotetramer.

It is found in the cytoplasm. It carries out the reaction Release of an N-terminal pyroglutamyl group from a polypeptide, the second amino acid generally not being Pro.. In terms of biological role, removes 5-oxoproline from various penultimate amino acid residues except L-proline. The sequence is that of Pyrrolidone-carboxylate peptidase from Bacillus mycoides (strain KBAB4) (Bacillus weihenstephanensis).